A 291-amino-acid polypeptide reads, in one-letter code: 6-deoxy-6-sulfogluconolactonase (291 aa).

3 residues coordinate a divalent metal cation: E17, N148, and D198. D198 (proton donor/acceptor) is an active-site residue.

This sequence belongs to the SMP-30/CGR1 family. It depends on a divalent metal cation as a cofactor.

It carries out the reaction 6-deoxy-6-sulfo-D-glucono-1,5-lactone + H2O = 6-deoxy-6-sulfo-D-gluconate + H(+). Functionally, catalyzes the hydrolysis of 6-deoxy-6-sulfo-D-glucono-1,5-lactone to form 6-deoxy-6-sulfo-D-gluconate. Is involved in a degradation pathway of sulfoquinovose (SQ) that allows P.putida SQ1 to use SQ as the sole carbon and energy source for growth. This is 6-deoxy-6-sulfogluconolactonase from Pseudomonas putida (Arthrobacter siderocapsulatus).